We begin with the raw amino-acid sequence, 115 residues long: Holo-[acyl-carrier-protein] synthase (115 aa).

Positions 5 and 50 each coordinate Mg(2+).

It belongs to the P-Pant transferase superfamily. AcpS family. Mg(2+) is required as a cofactor.

It is found in the cytoplasm. The enzyme catalyses apo-[ACP] + CoA = holo-[ACP] + adenosine 3',5'-bisphosphate + H(+). Its function is as follows. Transfers the 4'-phosphopantetheine moiety from coenzyme A to a Ser of acyl-carrier-protein. This Campylobacter fetus subsp. fetus (strain 82-40) protein is Holo-[acyl-carrier-protein] synthase.